A 253-amino-acid chain; its full sequence is Ribonuclease HII (253 aa).

The RNase H type-2 domain maps to 70–253; sequence NLIAGIDEVG…KSFEPIKSML (184 aa). Residues Asp76, Glu77, and Asp168 each contribute to the a divalent metal cation site.

This sequence belongs to the RNase HII family. It depends on Mn(2+) as a cofactor. The cofactor is Mg(2+).

Its subcellular location is the cytoplasm. The enzyme catalyses Endonucleolytic cleavage to 5'-phosphomonoester.. Its function is as follows. Endonuclease that specifically degrades the RNA of RNA-DNA hybrids. This is Ribonuclease HII from Streptococcus agalactiae serotype III (strain NEM316).